The primary structure comprises 308 residues: UPF0282 protein M164_2122 (308 aa).

This sequence belongs to the UPF0282 family.

This is UPF0282 protein M164_2122 from Saccharolobus islandicus (strain M.16.4 / Kamchatka #3) (Sulfolobus islandicus).